A 977-amino-acid polypeptide reads, in one-letter code: Protein bicaudal C homolog 1 (977 aa).

Positions Met1–Leu43 are disordered. A phosphoserine mark is found at Ser27, Ser32, and Ser45. KH domains follow at residues Arg134–Ile201 and Pro286–Leu350. N6-acetyllysine is present on Lys400. Polar residues predominate over residues Ser590–Glu621. Disordered regions lie at residues Ser590 to Gly622, Gly667 to Arg702, and Glu794 to Glu848. Residues Ser614 and Ser681 each carry the phosphoserine modification. A compositionally biased stretch (basic and acidic residues) spans Leu692 to Arg702. Over residues Glu794–Ser803 the composition is skewed to low complexity. In terms of domain architecture, SAM spans Phe875–Asn938.

This sequence belongs to the BicC family. In terms of assembly, interacts (via KH domains) with ANKS6 (via SAM domain) in an RNA-dependent manner. Interacts with ANKS3. As to expression, in the adult, predominantly expressed in heart and kidney. In 8 week old mice, expressed in growing primary oocytes and in the stromal cells of the theca.

The protein resides in the cytoplasm. In terms of biological role, putative RNA-binding protein. May be involved in regulating gene expression during embryonic development. In Mus musculus (Mouse), this protein is Protein bicaudal C homolog 1 (Bicc1).